Here is a 407-residue protein sequence, read N- to C-terminus: B3 domain-containing protein Os07g0183200 (407 aa).

A DNA-binding region (TF-B3) is located at residues 124 to 227; it reads FVKTLMISDF…ELYVGVRRQR (104 aa).

The protein resides in the nucleus. In Oryza sativa subsp. japonica (Rice), this protein is B3 domain-containing protein Os07g0183200.